We begin with the raw amino-acid sequence, 518 residues long: Integrator complex subunit 14 (518 aa).

One can recognise a VWFA domain in the interval 2–204 (PTVVVMDVSL…KNVQSMFGKL (203 aa)). Mg(2+)-binding residues include S10, S12, and T86. K418 bears the N6-acetyllysine mark.

Belongs to the Integrator subunit 14 family. In terms of assembly, component of the Integrator complex, composed of core subunits INTS1, INTS2, INTS3, INTS4, INTS5, INTS6, INTS7, INTS8, INTS9/RC74, INTS10, INTS11/CPSF3L, INTS12, INTS13, INTS14 and INTS15. The core complex associates with protein phosphatase 2A subunits PPP2CA and PPP2R1A, to form the Integrator-PP2A (INTAC) complex. INTS14 is part of the tail subcomplex, composed of INTS10, INTS13, INTS14 and INTS15. As to expression, strongly expressed in numerous cancer cells compared with their non-cancerous counterparts (lung, prostate, colon, stomach and skin).

It localises to the nucleus. In terms of biological role, component of the integrator complex, a multiprotein complex that terminates RNA polymerase II (Pol II) transcription in the promoter-proximal region of genes. The integrator complex provides a quality checkpoint during transcription elongation by driving premature transcription termination of transcripts that are unfavorably configured for transcriptional elongation: the complex terminates transcription by (1) catalyzing dephosphorylation of the C-terminal domain (CTD) of Pol II subunit POLR2A/RPB1 and SUPT5H/SPT5, (2) degrading the exiting nascent RNA transcript via endonuclease activity and (3) promoting the release of Pol II from bound DNA. The integrator complex is also involved in terminating the synthesis of non-coding Pol II transcripts, such as enhancer RNAs (eRNAs), small nuclear RNAs (snRNAs), telomerase RNAs and long non-coding RNAs (lncRNAs). Within the integrator complex, INTS14 is part of the integrator tail module that acts as a platform for the recruitment of transcription factors at promoters. The protein is Integrator complex subunit 14 of Homo sapiens (Human).